The sequence spans 124 residues: Small ribosomal subunit protein uS12 (124 aa).

The residue at position 89 (Asp-89) is a 3-methylthioaspartic acid. Positions 101-124 (TLDTSGVKDRRQSRSKYGAKAPKE) are disordered.

The protein belongs to the universal ribosomal protein uS12 family. Part of the 30S ribosomal subunit. Contacts proteins S8 and S17. May interact with IF1 in the 30S initiation complex.

With S4 and S5 plays an important role in translational accuracy. Functionally, interacts with and stabilizes bases of the 16S rRNA that are involved in tRNA selection in the A site and with the mRNA backbone. Located at the interface of the 30S and 50S subunits, it traverses the body of the 30S subunit contacting proteins on the other side and probably holding the rRNA structure together. The combined cluster of proteins S8, S12 and S17 appears to hold together the shoulder and platform of the 30S subunit. The sequence is that of Small ribosomal subunit protein uS12 from Synechococcus sp. (strain CC9902).